A 325-amino-acid polypeptide reads, in one-letter code: Protein TMED8 (325 aa).

The disordered stretch occupies residues 1–78; it reads MSDLQAAEGP…MVSPVSKDAT (78 aa). One can recognise a GOLD domain in the interval 159–323; that stretch reads PPCIWTFAKV…NKTLYFHIYY (165 aa). Residue Lys-169 is modified to N6-acetyllysine. The disordered stretch occupies residues 232–267; the sequence is TVQVSDSSDDEDEEEEEEEEIEEPVPAGDVERGSRS. A compositionally biased stretch (acidic residues) spans 238-254; that stretch reads SSDDEDEEEEEEEEIEE.

The polypeptide is Protein TMED8 (TMED8) (Homo sapiens (Human)).